The following is a 1087-amino-acid chain: Exportin-7-A (1087 aa).

Residues 30 to 96 (AEKALVEFTN…RNYVLTYLAT (67 aa)) enclose the Importin N-terminal domain.

The protein belongs to the exportin family. As to expression, expressed in oocytes (at protein level).

It is found in the cytoplasm. The protein localises to the nucleus. Functionally, mediates the nuclear export of proteins (cargos) with broad substrate specificity. The protein is Exportin-7-A (xpo7-a) of Xenopus laevis (African clawed frog).